The primary structure comprises 204 residues: MSDLRMTEAFLYMDYLCFRALCCKGPPPARPEYDLVCIGLTGSGKTSLLSKLCSESPDNVVSTTGFSIKAVPFQNAILNVKELGGADNIRKYWSRYYQGSQGVIFVLDSASSEDDLEAARNELHSALQHPQLCTLPFLILANHQDKPAARSVQEIKKYFELEPLARGKRWILQPCSLDDMDALKDSFSQLINLLEEKDHEAIRM.

Residues 39–46 (GLTGSGKT), 82–86 (ELGGA), and 142–145 (NHQD) each bind GTP.

The protein belongs to the small GTPase superfamily. Arf family.

In Pongo abelii (Sumatran orangutan), this protein is ADP-ribosylation factor-like protein 15 (ARL15).